The primary structure comprises 382 residues: Na(+)/H(+) antiporter NhaA 2 (382 aa).

Transmembrane regions (helical) follow at residues 7-27 (MALSETFPGILLIFFTFLALL), 58-78 (LDLWINDGLIAIFFLCIGLEL), 94-114 (SLPIFGALGGMITPALIFAAI), 124-144 (GWAIPTATDIAFAVGILMLLG), 153-173 (LFLLSLAIFDDLGAIVIIALF), 178-198 (LSALAIIICLFCIFALLLLNY), 199-219 (YHITHLSLYVLVGVVLWIAML), 255-275 (NPWVVYFILPLFAFANAGIDI), 291-311 (IILGLFLGKQLGVFIFCFIAI), 327-347 (FYGICILTGIGFTMSLFIDGL), and 361-381 (LAILIASFLSAIVGFIYLKIV).

This sequence belongs to the NhaA Na(+)/H(+) (TC 2.A.33) antiporter family.

The protein localises to the cell inner membrane. It catalyses the reaction Na(+)(in) + 2 H(+)(out) = Na(+)(out) + 2 H(+)(in). Functionally, na(+)/H(+) antiporter that extrudes sodium in exchange for external protons. This Campylobacter jejuni subsp. doylei (strain ATCC BAA-1458 / RM4099 / 269.97) protein is Na(+)/H(+) antiporter NhaA 2.